The chain runs to 420 residues: Pre-mRNA-splicing factor RBM22 (420 aa).

The segment at 159 to 186 adopts a C3H1-type zinc-finger fold; it reads RNRPHICSFWVKGECKRGEECPYRHEKP. The RRM domain occupies 232-305; that stretch reads TTLYVGGLGD…RRLNVKWGRS (74 aa). Disordered stretches follow at residues 303-343 and 372-420; these read GRSQ…AAEE and APPP…HSSP. The span at 309-318 shows a compositional bias: basic and acidic residues; that stretch reads RGKEKDKEGT.

Belongs to the SLT11 family. Component of the pre-catalytic and catalytic spliceosome complexes. Component of the postcatalytic spliceosome P complex.

It localises to the nucleus. Its subcellular location is the cytoplasm. Its function is as follows. Required for pre-mRNA splicing as component of the activated spliceosome. Involved in the first step of pre-mRNA splicing. Binds directly to the internal stem-loop (ISL) domain of the U6 snRNA and to the pre-mRNA intron near the 5' splice site during the activation and catalytic phases of the spliceosome cycle. This Gallus gallus (Chicken) protein is Pre-mRNA-splicing factor RBM22 (RBM22).